A 568-amino-acid polypeptide reads, in one-letter code: Lipoprotein LpqB (568 aa).

An N-terminal signal peptide occupies residues Met-1–Gly-23. Residue Cys-24 is the site of N-palmitoyl cysteine attachment. Cys-24 carries S-diacylglycerol cysteine lipidation.

Belongs to the LpqB lipoprotein family.

It localises to the cell membrane. This chain is Lipoprotein LpqB, found in Corynebacterium glutamicum (strain R).